The chain runs to 150 residues: Large ribosomal subunit protein uL15 (150 aa).

It belongs to the universal ribosomal protein uL15 family. As to quaternary structure, part of the 50S ribosomal subunit.

Functionally, binds to the 23S rRNA. The sequence is that of Large ribosomal subunit protein uL15 from Rickettsia prowazekii (strain Madrid E).